Consider the following 356-residue polypeptide: Palmitoyltransferase swf1 (356 aa).

The Lumenal portion of the chain corresponds to 1 to 2 (MD). The helical transmembrane segment at 3-23 (FFYKYLALVAIASLMVFILLF) threads the bilayer. The Cytoplasmic segment spans residues 24–78 (GQIPKLKYTVIGKLNRFFMVTIPYHLHVLDSRYADGRCSAAMRSLSNYVLYKNNP). Residues 79–99 (LVVFLYLALITIGIASFFIYG) traverse the membrane as a helical segment. Residues 100-107 (SSLTQKFS) are Lumenal-facing. Residues 108–128 (IIDWISVLTSVLLPYISLYIA) form a helical membrane-spanning segment. At 129-201 (AKSNPGKIDL…NNCVGLNNAR (73 aa)) the chain is on the cytoplasmic side. A DHHC domain is found at 158–208 (NKCSTCKFEKPARSKHCRLCNICVEKFDHHCIWINNCVGLNNARYFFLFLL). The helical transmembrane segment at 202–222 (YFFLFLLCTIQLLFHSILRLG) threads the bilayer. The Lumenal segment spans residues 223-253 (YHFNALRDMRQYPSFLRSWWFAIKSEGELGS). A helical membrane pass occupies residues 254–274 (VFLISLICSVLVLCLLGYEFF). Over 275-356 (LVYAGYTTNE…FPYRHLYSTT (82 aa)) the chain is Cytoplasmic.

This sequence belongs to the DHHC palmitoyltransferase family. SWF1 subfamily.

It localises to the endoplasmic reticulum membrane. It carries out the reaction L-cysteinyl-[protein] + hexadecanoyl-CoA = S-hexadecanoyl-L-cysteinyl-[protein] + CoA. Functionally, palmitoyltransferase that targets several endosomal SNAREs. Palmitoylates the SNAREs at cysteine residues close to the cytoplasmic end of their transmembrane domain. May have a role in the cellular quality control of transmembrane domain-containing proteins. This is Palmitoyltransferase swf1 (swf1) from Schizosaccharomyces pombe (strain 972 / ATCC 24843) (Fission yeast).